The sequence spans 249 residues: 3-deoxy-D-manno-octulosonic acid kinase (249 aa).

Asp175 is an active-site residue.

Belongs to the protein kinase superfamily. KdkA/RfaP family.

The protein localises to the cell inner membrane. The enzyme catalyses an alpha-Kdo-(2-&gt;6)-lipid IVA + ATP = a 4-O-phospho-alpha-Kdo-(2-&gt;6)-lipid IVA + ADP + H(+). It functions in the pathway bacterial outer membrane biogenesis; LPS core biosynthesis. Its function is as follows. Catalyzes the ATP-dependent phosphorylation of the 3-deoxy-D-manno-octulosonic acid (Kdo) residue in Kdo-lipid IV(A) at the 4-OH position. The polypeptide is 3-deoxy-D-manno-octulosonic acid kinase (Xanthomonas euvesicatoria pv. vesicatoria (strain 85-10) (Xanthomonas campestris pv. vesicatoria)).